The following is a 569-amino-acid chain: Phospholipase B-like protein D (569 aa).

Positions 1–22 are cleaved as a signal peptide; sequence MIIFKNLLKLLIILLTIKLYFC. 5 N-linked (GlcNAc...) asparagine glycosylation sites follow: Asn93, Asn126, Asn181, Asn425, and Asn430.

It belongs to the phospholipase B-like family.

Its subcellular location is the secreted. Its function is as follows. Probable phospholipase. The sequence is that of Phospholipase B-like protein D (plbD) from Dictyostelium discoideum (Social amoeba).